The sequence spans 360 residues: GTPase Obg (360 aa).

Residues 1 to 156 enclose the Obg domain; the sequence is MFVDSVEIII…KCVRLELKLI (156 aa). The OBG-type G domain occupies 157-360; it reads ADIGLVGFPN…LKFVLLEALP (204 aa). Residues 163-170, 188-192, 210-213, 279-282, and 341-343 each bind GTP; these read GFPNAGKS, FTTLV, DIPG, NKCD, and SAL. 2 residues coordinate Mg(2+): Ser-170 and Thr-190.

Belongs to the TRAFAC class OBG-HflX-like GTPase superfamily. OBG GTPase family. As to quaternary structure, monomer. Mg(2+) is required as a cofactor.

Its subcellular location is the cytoplasm. In terms of biological role, an essential GTPase which binds GTP, GDP and possibly (p)ppGpp with moderate affinity, with high nucleotide exchange rates and a fairly low GTP hydrolysis rate. Plays a role in control of the cell cycle, stress response, ribosome biogenesis and in those bacteria that undergo differentiation, in morphogenesis control. In Helicobacter pylori (strain Shi470), this protein is GTPase Obg.